Reading from the N-terminus, the 302-residue chain is Glutaminase (302 aa).

The substrate site is built by Ser-61, Asn-111, Glu-155, Asn-162, Tyr-186, Tyr-238, and Val-256.

Belongs to the glutaminase family. Homotetramer.

It carries out the reaction L-glutamine + H2O = L-glutamate + NH4(+). In Pseudomonas aeruginosa (strain ATCC 15692 / DSM 22644 / CIP 104116 / JCM 14847 / LMG 12228 / 1C / PRS 101 / PAO1), this protein is Glutaminase.